Here is a 699-residue protein sequence, read N- to C-terminus: 4-alpha-glucanotransferase (699 aa).

The protein belongs to the disproportionating enzyme family.

It localises to the cytoplasm. It catalyses the reaction Transfers a segment of a (1-&gt;4)-alpha-D-glucan to a new position in an acceptor, which may be glucose or a (1-&gt;4)-alpha-D-glucan.. This is 4-alpha-glucanotransferase (malQ) from Haemophilus influenzae (strain ATCC 51907 / DSM 11121 / KW20 / Rd).